The chain runs to 242 residues: Tropomyosin-1 (242 aa).

2 disordered regions span residues 1-31 (MDAI…ELTA) and 65-96 (TSLT…QTDY). Residues 1–242 (MDAIKKKMSA…DELLLELASM (242 aa)) are a coiled coil. 2 stretches are compositionally biased toward basic and acidic residues: residues 13–23 (TKLEEADKQAQ) and 70–96 (KYNE…QTDY).

This sequence belongs to the tropomyosin family. As to quaternary structure, homodimer. Expressed ubiquitously.

This is Tropomyosin-1 (TPM1) from Podocoryna carnea (Hydrozoan).